A 95-amino-acid chain; its full sequence is Aspartyl/glutamyl-tRNA(Asn/Gln) amidotransferase subunit C (95 aa).

It belongs to the GatC family. As to quaternary structure, heterotrimer of A, B and C subunits.

The catalysed reaction is L-glutamyl-tRNA(Gln) + L-glutamine + ATP + H2O = L-glutaminyl-tRNA(Gln) + L-glutamate + ADP + phosphate + H(+). It carries out the reaction L-aspartyl-tRNA(Asn) + L-glutamine + ATP + H2O = L-asparaginyl-tRNA(Asn) + L-glutamate + ADP + phosphate + 2 H(+). Allows the formation of correctly charged Asn-tRNA(Asn) or Gln-tRNA(Gln) through the transamidation of misacylated Asp-tRNA(Asn) or Glu-tRNA(Gln) in organisms which lack either or both of asparaginyl-tRNA or glutaminyl-tRNA synthetases. The reaction takes place in the presence of glutamine and ATP through an activated phospho-Asp-tRNA(Asn) or phospho-Glu-tRNA(Gln). The chain is Aspartyl/glutamyl-tRNA(Asn/Gln) amidotransferase subunit C from Ruegeria sp. (strain TM1040) (Silicibacter sp.).